Here is a 109-residue protein sequence, read N- to C-terminus: Glutaredoxin 4 (109 aa).

A Glutaredoxin domain is found at 4–106 (LDKIKKQISE…TLLADVAAKY (103 aa)). Lys21 is a glutathione binding site. Cys29 contacts [2Fe-2S] cluster. Glutathione contacts are provided by residues Arg58, Phe70, and 83–84 (CD).

Belongs to the glutaredoxin family. Monothiol subfamily. Homodimer.

Its subcellular location is the cytoplasm. Its function is as follows. Monothiol glutaredoxin involved in the biogenesis of iron-sulfur clusters. The chain is Glutaredoxin 4 (grxD) from Pasteurella multocida (strain Pm70).